A 361-amino-acid polypeptide reads, in one-letter code: Transcription factor TCP10 (361 aa).

The TCP domain maps to 29-87 (RKDRHSKVFTSKGPRDRRVRLSAHTAIQFYDVQDRLGYDRPSKAVDWLIKKAKTAIDKL). Disordered stretches follow at residues 220-259 (DLTM…QPSM) and 295-317 (SWDH…SMFA). Over residues 295 to 304 (SWDHHQTTSD) the composition is skewed to basic and acidic residues.

Interacts with AHP1, AHP2 and AHP3. Interacts with SPL. Mostly detected in lateral organs, such as leaves and flowers. Expressed in cotyledons, particularly in the vascular region, in leaves, roots, stems, buds, flowers and immature siliques.

It localises to the nucleus. Its function is as follows. Plays a pivotal role in the control of morphogenesis of shoot organs by negatively regulating the expression of boundary-specific genes such as CUC genes, probably through the induction of miRNA (e.g. miR164). Participates in ovule development. The protein is Transcription factor TCP10 (TCP10) of Arabidopsis thaliana (Mouse-ear cress).